The sequence spans 183 residues: UPF0398 protein PEPE_0933 (183 aa).

It belongs to the UPF0398 family.

In Pediococcus pentosaceus (strain ATCC 25745 / CCUG 21536 / LMG 10740 / 183-1w), this protein is UPF0398 protein PEPE_0933.